The primary structure comprises 580 residues: uncharacterized protein (580 aa).

A PE-PPE domain is found at 300–525 (PGYTATFLET…LRVLVELGYD (226 aa)).

This sequence belongs to the mycobacterial PPE family.

This is an uncharacterized protein from Mycobacterium tuberculosis (strain CDC 1551 / Oshkosh).